A 192-amino-acid chain; its full sequence is Rho-related protein racC (192 aa).

Position 13-20 (13-20) interacts with GTP; sequence GDGAVGKT. The Effector region signature appears at 35–43; it reads YIPTVFDNY. GTP is bound by residues 60–64 and 118–121; these read DTAGQ and TKLD. Cysteine 189 carries the post-translational modification Cysteine methyl ester. A lipid anchor (S-geranylgeranyl cysteine) is attached at cysteine 189. Residues 190 to 192 constitute a propeptide, removed in mature form; it reads IVM.

The protein belongs to the small GTPase superfamily. Rho family. As to quaternary structure, interacts with pakB.

The protein localises to the cell membrane. The sequence is that of Rho-related protein racC (racC) from Dictyostelium discoideum (Social amoeba).